The following is a 215-amino-acid chain: 3,4-dihydroxy-2-butanone 4-phosphate synthase (215 aa).

D-ribulose 5-phosphate contacts are provided by residues 37-38 (RE), D42, 150-154 (RPGHT), and E174. Residue E38 participates in Mg(2+) binding. H153 is a Mg(2+) binding site.

This sequence belongs to the DHBP synthase family. In terms of assembly, homodimer. The cofactor is Mg(2+). It depends on Mn(2+) as a cofactor.

It carries out the reaction D-ribulose 5-phosphate = (2S)-2-hydroxy-3-oxobutyl phosphate + formate + H(+). It participates in cofactor biosynthesis; riboflavin biosynthesis; 2-hydroxy-3-oxobutyl phosphate from D-ribulose 5-phosphate: step 1/1. In terms of biological role, catalyzes the conversion of D-ribulose 5-phosphate to formate and 3,4-dihydroxy-2-butanone 4-phosphate. In Buchnera aphidicola subsp. Acyrthosiphon pisum (strain 5A), this protein is 3,4-dihydroxy-2-butanone 4-phosphate synthase.